Here is a 406-residue protein sequence, read N- to C-terminus: Tyrosine--tRNA ligase (406 aa).

Tyr-35 contacts L-tyrosine. Positions 40 to 49 (PTADSLHVGH) match the 'HIGH' region motif. The L-tyrosine site is built by Tyr-168 and Gln-172. Positions 228–232 (KMGKT) match the 'KMSKS' region motif. Lys-231 provides a ligand contact to ATP. The S4 RNA-binding domain maps to 340–404 (AELLDILVEA…RGKKNYNKIV (65 aa)).

Belongs to the class-I aminoacyl-tRNA synthetase family. TyrS type 1 subfamily. As to quaternary structure, homodimer.

It is found in the cytoplasm. The catalysed reaction is tRNA(Tyr) + L-tyrosine + ATP = L-tyrosyl-tRNA(Tyr) + AMP + diphosphate + H(+). Catalyzes the attachment of tyrosine to tRNA(Tyr) in a two-step reaction: tyrosine is first activated by ATP to form Tyr-AMP and then transferred to the acceptor end of tRNA(Tyr). This is Tyrosine--tRNA ligase from Clostridium perfringens (strain 13 / Type A).